Consider the following 398-residue polypeptide: Ribosomal RNA large subunit methyltransferase I (398 aa).

A PUA domain is found at 2-79 (SVRLVLAKGR…LSESIDIAFF (78 aa)).

Belongs to the methyltransferase superfamily. RlmI family.

It is found in the cytoplasm. The catalysed reaction is cytidine(1962) in 23S rRNA + S-adenosyl-L-methionine = 5-methylcytidine(1962) in 23S rRNA + S-adenosyl-L-homocysteine + H(+). In terms of biological role, specifically methylates the cytosine at position 1962 (m5C1962) of 23S rRNA. This is Ribosomal RNA large subunit methyltransferase I from Shigella dysenteriae serotype 1 (strain Sd197).